The sequence spans 327 residues: Undecaprenyl-phosphate 4-deoxy-4-formamido-L-arabinose transferase (327 aa).

The Cytoplasmic portion of the chain corresponds to 1-235 (MFDAAPIKKV…TCLTTTPLRL (235 aa)). The chain crosses the membrane as a helical span at residues 236–256 (LSLLGSVIAIGGFSLSVLLIV). Topologically, residues 257 to 269 (LRLALGPQWAAEG) are periplasmic. Residues 270-290 (VFMLFAVLFTFIGAQFIGMGL) traverse the membrane as a helical segment. At 291–327 (LGEYIGRIYNDVRARPRYFVQQVIYPESTPFTEESHQ) the chain is on the cytoplasmic side.

The protein belongs to the glycosyltransferase 2 family.

Its subcellular location is the cell inner membrane. The enzyme catalyses UDP-4-deoxy-4-formamido-beta-L-arabinose + di-trans,octa-cis-undecaprenyl phosphate = 4-deoxy-4-formamido-alpha-L-arabinopyranosyl di-trans,octa-cis-undecaprenyl phosphate + UDP. Its pathway is glycolipid biosynthesis; 4-amino-4-deoxy-alpha-L-arabinose undecaprenyl phosphate biosynthesis; 4-amino-4-deoxy-alpha-L-arabinose undecaprenyl phosphate from UDP-4-deoxy-4-formamido-beta-L-arabinose and undecaprenyl phosphate: step 1/2. The protein operates within bacterial outer membrane biogenesis; lipopolysaccharide biosynthesis. Its function is as follows. Catalyzes the transfer of 4-deoxy-4-formamido-L-arabinose from UDP to undecaprenyl phosphate. The modified arabinose is attached to lipid A and is required for resistance to polymyxin and cationic antimicrobial peptides. The sequence is that of Undecaprenyl-phosphate 4-deoxy-4-formamido-L-arabinose transferase from Salmonella choleraesuis (strain SC-B67).